A 461-amino-acid polypeptide reads, in one-letter code: Acetylcholine receptor subunit alpha (461 aa).

The signal sequence occupies residues 1-24; it reads MILCSYWHVGLVLLLFSCCGLVLG. Over 25 to 234 the chain is Extracellular; the sequence is SEHETRLVAN…ITYHFIMQRI (210 aa). 2 disulfides stabilise this stretch: Cys152–Cys166 and Cys216–Cys217. Asn165 carries an N-linked (GlcNAc...) asparagine glycan. 3 helical membrane-spanning segments follow: residues 235 to 259, 267 to 285, and 301 to 320; these read PLYFVVNVIIPCLLFSFLTVLVFYL, MTLSISVLLSLTVFLLVIV, and YMLFTMIFVISSIIVTVVVI. Over 321–432 the chain is Cytoplasmic; it reads NTHHRSPSTH…WKYVAMVIDH (112 aa). Residues 433–451 form a helical membrane-spanning segment; the sequence is ILLCVFMLICIIGTVSVFA.

It belongs to the ligand-gated ion channel (TC 1.A.9) family. Acetylcholine receptor (TC 1.A.9.1) subfamily. Alpha-1/CHRNA1 sub-subfamily. As to quaternary structure, pentamer of two alpha chains, and one each of the beta, delta, and gamma chains.

Its subcellular location is the postsynaptic cell membrane. It localises to the cell membrane. It catalyses the reaction K(+)(in) = K(+)(out). The enzyme catalyses Na(+)(in) = Na(+)(out). Its function is as follows. Upon acetylcholine binding, the AChR responds by an extensive change in conformation that affects all subunits and leads to opening of an ion-conducting channel across the plasma membrane. This chain is Acetylcholine receptor subunit alpha (CHRNA1), found in Torpedo marmorata (Marbled electric ray).